The primary structure comprises 511 residues: Maturase K (511 aa).

Belongs to the intron maturase 2 family. MatK subfamily.

It localises to the plastid. Its subcellular location is the chloroplast. In terms of biological role, usually encoded in the trnK tRNA gene intron. Probably assists in splicing its own and other chloroplast group II introns. The sequence is that of Maturase K from Hordeum secalinum (Meadow barley).